The chain runs to 408 residues: Sporulation integral membrane protein YlbJ (408 aa).

Transmembrane regions (helical) follow at residues 6 to 26 (INTLLIASFFLFLTATVISHP), 43 to 63 (VVFPSLLPFFILSELLIGFGI), 81 to 101 (VPGVGGFVLAMGMASGNPAGA), 131 to 151 (LFIFGAVAVGFFQNASLGILL), 214 to 234 (VTSSVQTLLMVGGFIILFSVF), 294 to 314 (IIVSFILGFSGFSVQAQVAGI), 324 to 344 (PFFIARLLQGVYAAVFVMLLW), and 377 to 397 (LLVQIGPAVTLCALFTYIIIF).

The protein resides in the cell membrane. Its function is as follows. Required for spore cortex formation. In Bacillus subtilis (strain 168), this protein is Sporulation integral membrane protein YlbJ (ylbJ).